A 472-amino-acid polypeptide reads, in one-letter code: Radical SAM cyclopropyl synthase TigE (472 aa).

The region spanning 106-331 (GEQIKAIQLV…VIDLYEYGLD (226 aa)) is the Radical SAM core domain. Residues Cys-120, Cys-124, Cys-127, Tyr-339, Cys-360, Cys-378, Cys-414, Cys-417, Cys-423, Cys-427, and Cys-446 each contribute to the [4Fe-4S] cluster site.

This sequence belongs to the radical SAM superfamily. Requires [4Fe-4S] cluster as cofactor.

The catalysed reaction is L-isoleucyl-[protein] + AH2 + 2 S-adenosyl-L-methionine = methylcyclopropylglycine-[protein] + 2 5'-deoxyadenosine + 2 L-methionine + A + 2 H(+). Its function is as follows. Radical S-adenosylmethionine (SAM) enzyme that catalyzes the formation of methylcyclopropylglycine (mCPG) residues from isoleucine residues residing in the repeating TIGSVS motif of the precursor peptide TigB. Is thus involved in the maturation of a ribosomally synthesized and post-translationally modified peptide (RiPP). This chain is Radical SAM cyclopropyl synthase TigE, found in Paramaledivibacter caminithermalis (strain DSM 15212 / CIP 107654 / DViRD3) (Clostridium caminithermale).